The sequence spans 473 residues: MKTLYSLRRFYHVETLFNGTLALTGRDQETTGFAWWAGNARLINLSGKLLGAHVAHAGLIVFWAGAMNLFEVAHFVPEKPMYEQGLILLPHLATLGWGVGPGGEVIDTFPYFVSGVLHLISSAVLGFGGIYHALLGPETLEESFPFFGYVWKDRNKMTTILGIHLILLGIGAFLLVFKALYFGGIYDTWAPGGGDVRKITNLTLSPSIIFGYLLKSPFGGEGWIVSVDDLEDIIGGHVWLGSICILGGIWHILTKPFAWARRALVWSGEAYLSYSLGALSVFGFIACCFVWFNNTAYPSEFYGPTGPEASQAQAFTFLVRDQRLGANVGSAQGPTGLGKYLMRSPTGEVIFGGETMRFWDLRAPWLEPLRGPNGLDLSRLKKDIQPWQERRSAEYMTHAPLGSLNSVGGVATEINAVNYVSPRSWLATSHFVLGFFLFVGHLWHAGRARAAAAGFEKGIDRDFEPVLSMTPLN.

The propeptide occupies 1-14 (MKTLYSLRRFYHVE). N-acetylthreonine is present on threonine 15. Threonine 15 bears the Phosphothreonine mark. Transmembrane regions (helical) follow at residues 69–93 (LFEV…PHLA), 134–155 (LLGP…KDRN), 178–200 (KALY…RKIT), 255–275 (KPFA…LSYS), and 291–312 (WFNN…ASQA). Glutamate 367 provides a ligand contact to [CaMn4O5] cluster. The helical transmembrane segment at 447–471 (RARAAAAGFEKGIDRDFEPVLSMTP) threads the bilayer.

The protein belongs to the PsbB/PsbC family. PsbC subfamily. In terms of assembly, PSII is composed of 1 copy each of membrane proteins PsbA, PsbB, PsbC, PsbD, PsbE, PsbF, PsbH, PsbI, PsbJ, PsbK, PsbL, PsbM, PsbT, PsbX, PsbY, PsbZ, Psb30/Ycf12, at least 3 peripheral proteins of the oxygen-evolving complex and a large number of cofactors. It forms dimeric complexes. It depends on Binds multiple chlorophylls and provides some of the ligands for the Ca-4Mn-5O cluster of the oxygen-evolving complex. It may also provide a ligand for a Cl- that is required for oxygen evolution. PSII binds additional chlorophylls, carotenoids and specific lipids. as a cofactor.

It is found in the plastid. It localises to the chloroplast thylakoid membrane. Functionally, one of the components of the core complex of photosystem II (PSII). It binds chlorophyll and helps catalyze the primary light-induced photochemical processes of PSII. PSII is a light-driven water:plastoquinone oxidoreductase, using light energy to abstract electrons from H(2)O, generating O(2) and a proton gradient subsequently used for ATP formation. The protein is Photosystem II CP43 reaction center protein of Glycine max (Soybean).